The chain runs to 513 residues: ATP synthase subunit alpha (513 aa).

Position 169–176 (169–176 (GDRQTGKT)) interacts with ATP.

This sequence belongs to the ATPase alpha/beta chains family. In terms of assembly, F-type ATPases have 2 components, CF(1) - the catalytic core - and CF(0) - the membrane proton channel. CF(1) has five subunits: alpha(3), beta(3), gamma(1), delta(1), epsilon(1). CF(0) has three main subunits: a(1), b(2) and c(9-12). The alpha and beta chains form an alternating ring which encloses part of the gamma chain. CF(1) is attached to CF(0) by a central stalk formed by the gamma and epsilon chains, while a peripheral stalk is formed by the delta and b chains.

Its subcellular location is the cell inner membrane. It carries out the reaction ATP + H2O + 4 H(+)(in) = ADP + phosphate + 5 H(+)(out). Produces ATP from ADP in the presence of a proton gradient across the membrane. The alpha chain is a regulatory subunit. This chain is ATP synthase subunit alpha, found in Idiomarina loihiensis (strain ATCC BAA-735 / DSM 15497 / L2-TR).